The following is a 396-amino-acid chain: Phosphoglycerate kinase (396 aa).

Residues 21–23 (DLN), Arg-36, 59–62 (HFDR), Arg-118, and Arg-151 each bind substrate. ATP contacts are provided by residues Lys-201, Glu-323, and 353–356 (GGDT).

This sequence belongs to the phosphoglycerate kinase family. In terms of assembly, monomer.

The protein localises to the cytoplasm. The enzyme catalyses (2R)-3-phosphoglycerate + ATP = (2R)-3-phospho-glyceroyl phosphate + ADP. The protein operates within carbohydrate degradation; glycolysis; pyruvate from D-glyceraldehyde 3-phosphate: step 2/5. This chain is Phosphoglycerate kinase, found in Granulibacter bethesdensis (strain ATCC BAA-1260 / CGDNIH1).